The chain runs to 80 residues: Large ribosomal subunit protein bL31 (80 aa).

Zn(2+)-binding residues include C16, C18, C38, and C41.

Belongs to the bacterial ribosomal protein bL31 family. Type A subfamily. In terms of assembly, part of the 50S ribosomal subunit. It depends on Zn(2+) as a cofactor.

Binds the 23S rRNA. The polypeptide is Large ribosomal subunit protein bL31 (Rhodococcus jostii (strain RHA1)).